The sequence spans 670 residues: Soluble lamin-associated protein of 75 kDa (670 aa).

Disordered stretches follow at residues 273–301 (PKRP…SSEM) and 314–670 (STSE…AKLT). Residue Ser-350 is modified to Phosphoserine. Residues 358 to 375 (SQTSLTASINKLESTARP) are compositionally biased toward polar residues. A compositionally biased stretch (acidic residues) spans 378–387 (SSEEFLEEEP). Position 379 is a phosphoserine (Ser-379). Positions 414–423 (EKQDGEKESE) are enriched in basic and acidic residues. The span at 442–453 (TEEEDSTSEVLD) shows a compositional bias: acidic residues. Ser-449 carries the phosphoserine modification. The span at 460–470 (PFNSSEDSTNL) shows a compositional bias: polar residues. 2 stretches are compositionally biased toward basic and acidic residues: residues 479–494 (KPPE…RIPD) and 504–514 (SDEKGHMEEKL). Position 515 is a phosphoserine (Ser-515). Composition is skewed to polar residues over residues 558 to 569 (ENLSPNTTSSLE) and 579 to 591 (PQET…QSSL). Ser-615, Ser-618, and Ser-635 each carry phosphoserine. Residues 651–670 (NLRRKAKGHKGPAKKKAKLT) show a composition bias toward basic residues.

Belongs to the FAM169 family.

It localises to the nucleus envelope. Its subcellular location is the nucleus inner membrane. This is Soluble lamin-associated protein of 75 kDa (FAM169A) from Homo sapiens (Human).